Consider the following 79-residue polypeptide: Dolichyl-diphosphooligosaccharide--protein glycosyltransferase subunit TMEM258 (79 aa).

The next 2 helical transmembrane spans lie at 19–39 (PLLT…FTMI) and 55–75 (FIAA…LLWV).

The protein belongs to the OST5 family. Component of the oligosaccharyltransferase (OST) complex.

It localises to the membrane. Its pathway is protein modification; protein glycosylation. In terms of biological role, subunit of the oligosaccharyl transferase (OST) complex that catalyzes the initial transfer of a defined glycan (Glc(3)Man(9)GlcNAc(2) in eukaryotes) from the lipid carrier dolichol-pyrophosphate to an asparagine residue within an Asn-X-Ser/Thr consensus motif in nascent polypeptide chains, the first step in protein N-glycosylation. N-glycosylation occurs cotranslationally and the complex associates with the Sec61 complex at the channel-forming translocon complex that mediates protein translocation across the endoplasmic reticulum (ER). All subunits are required for a maximal enzyme activity. This is Dolichyl-diphosphooligosaccharide--protein glycosyltransferase subunit TMEM258 from Caenorhabditis elegans.